The sequence spans 173 residues: Small ribosomal subunit protein uS5 (173 aa).

The 64-residue stretch at 17 to 80 folds into the S5 DRBM domain; the sequence is WQERVIQIRR…ADGKKQLIEV (64 aa).

It belongs to the universal ribosomal protein uS5 family. As to quaternary structure, part of the 30S ribosomal subunit. Contacts proteins S4 and S8.

In terms of biological role, with S4 and S12 plays an important role in translational accuracy. Its function is as follows. Located at the back of the 30S subunit body where it stabilizes the conformation of the head with respect to the body. This chain is Small ribosomal subunit protein uS5, found in Gloeothece citriformis (strain PCC 7424) (Cyanothece sp. (strain PCC 7424)).